We begin with the raw amino-acid sequence, 1640 residues long: Basal body protein 10 (1640 aa).

Residues 11-64 are homodimerization; it reads VLRRKLEALGYSDPLEPASLQLVQKLVEDLVHTTDSYTAVKQQCAKQAQEIAAF. Positions 93-148 form a coiled coil; it reads AERHEREAREHYTAVKRLEDTIAELSYWKHAAAEKLASADKENAGLRKRCEELAKL. The tract at residues 154–185 is disordered; that stretch reads SGAATPQSVAPKISSRSPIRVAPPPSPPRPRQ. The span at 174–183 shows a compositional bias: pro residues; that stretch reads VAPPPSPPRP. Coiled-coil stretches lie at residues 191-232, 260-332, 370-411, 461-722, 758-960, 1010-1030, 1059-1086, 1129-1282, 1323-1494, and 1523-1557; these read LQAA…RDVE, ILQL…LQDT, VERL…AQSR, FAAL…AEAD, ARQM…AQAA, GEAL…LVRE, RASA…LAAE, INQY…LQAS, AKDQ…AERD, and AELA…TRAT. Residues 1592–1618 show a composition bias toward low complexity; sequence GQGQVQGPAGTAPAAAAGAPGPQPGQA. The tract at residues 1592 to 1640 is disordered; the sequence is GQGQVQGPAGTAPAAAAGAPGPQPGQAQAGGFGGAHGGGSISLSGGPRR. Residues 1619–1631 are compositionally biased toward gly residues; that stretch reads QAGGFGGAHGGGS.

Belongs to the CEP135/TSGA10 family. As to quaternary structure, homodimer.

The protein localises to the cytoplasm. It is found in the cytoskeleton. The protein resides in the microtubule organizing center. Its subcellular location is the centrosome. It localises to the centriole. In terms of biological role, microtubule-binding protein essential for cytoskeletal organization (e.g. rootlet microtubule bundles) and flagellar basal body/centriole assembly. This Chlamydomonas reinhardtii (Chlamydomonas smithii) protein is Basal body protein 10.